A 206-amino-acid chain; its full sequence is MKTTHTSLPFAGHTLHFVEFDPANFCEQDLLWLPHYAQLQHAGRKRKTEHLAGRIAAVYALREYGYKCVPAIGELRQPVWPAEVYGSISHCGTTALAVVSRQPIGIDIEEIFSVQTARELTDNIITPAEHERLADCGLAFSLALTLAFSAKESAFKASEIQTDAGFLDYQIISWNKQQVIIHRENEMFAVHWQIKEKIVITLCQHD.

3 residues coordinate Mg(2+): Asp-107, Glu-109, and Glu-152.

The protein belongs to the P-Pant transferase superfamily. EntD family. As to quaternary structure, entB, EntD, EntE, and EntF form a multienzyme complex called enterobactin synthase. The cofactor is Mg(2+).

The protein localises to the membrane. The catalysed reaction is apo-[aryl-carrier protein] + CoA = holo-[aryl-carrier protein] + adenosine 3',5'-bisphosphate + H(+). It carries out the reaction apo-[peptidyl-carrier protein] + CoA = holo-[peptidyl-carrier protein] + adenosine 3',5'-bisphosphate + H(+). It participates in siderophore biosynthesis; enterobactin biosynthesis. Involved in the biosynthesis of the siderophore enterobactin (enterochelin), which is a macrocyclic trimeric lactone of N-(2,3-dihydroxybenzoyl)-serine. The serine trilactone serves as a scaffolding for the three catechol functionalities that provide hexadentate coordination for the tightly ligated iron(2+) atoms. Plays an essential role in the assembly of the enterobactin by catalyzing the transfer of the 4'-phosphopantetheine (Ppant) moiety from coenzyme A to the apo-domains of both EntB (ArCP domain) and EntF (PCP domain) to yield their holo-forms which make them competent for the activation of 2,3-dihydroxybenzoate (DHB) and L-serine, respectively. The sequence is that of Enterobactin synthase component D from Escherichia coli (strain K12).